Consider the following 244-residue polypeptide: Krueppel-like factor 9 (244 aa).

Disordered regions lie at residues 26-51 (EHGG…GDPG) and 79-143 (PSVC…EKRH). A compositionally biased stretch (basic and acidic residues) spans 32-51 (EAERLRLPEREVTKEHGDPG). The residue at position 122 (serine 122) is a Phosphoserine. A compositionally biased stretch (basic residues) spans 134 to 143 (KGKHASEKRH). 3 consecutive C2H2-type zinc fingers follow at residues 143–167 (HKCP…YRVH), 173–197 (FPCT…YRTH), and 203–225 (FRCP…ARRH).

It belongs to the Sp1 C2H2-type zinc-finger protein family. As to quaternary structure, interacts with ZZEF1.

The protein resides in the nucleus. In terms of biological role, transcription factor that binds to GC box promoter elements. Selectively activates mRNA synthesis from genes containing tandem repeats of GC boxes but represses genes with a single GC box. Acts as an epidermal circadian transcription factor regulating keratinocyte proliferation. The protein is Krueppel-like factor 9 (Klf9) of Mus musculus (Mouse).